A 382-amino-acid chain; its full sequence is Mannitol-1-phosphate 5-dehydrogenase (382 aa).

Residue 3 to 14 (AIHFGAGNIGRG) coordinates NAD(+).

This sequence belongs to the mannitol dehydrogenase family.

It carries out the reaction D-mannitol 1-phosphate + NAD(+) = beta-D-fructose 6-phosphate + NADH + H(+). The sequence is that of Mannitol-1-phosphate 5-dehydrogenase from Psychromonas ingrahamii (strain DSM 17664 / CCUG 51855 / 37).